We begin with the raw amino-acid sequence, 185 residues long: Large ribosomal subunit protein uL6 (185 aa).

It belongs to the universal ribosomal protein uL6 family. In terms of assembly, part of the 50S ribosomal subunit.

Its function is as follows. This protein binds to the 23S rRNA, and is important in its secondary structure. It is located near the subunit interface in the base of the L7/L12 stalk, and near the tRNA binding site of the peptidyltransferase center. This chain is Large ribosomal subunit protein uL6, found in Deinococcus deserti (strain DSM 17065 / CIP 109153 / LMG 22923 / VCD115).